Consider the following 313-residue polypeptide: ADP-L-glycero-D-manno-heptose-6-epimerase (313 aa).

Residues 10–11 (MI), 31–32 (DN), Lys-38, Arg-53, 75–79 (EGACS), and Asn-92 contribute to the NADP(+) site. The Proton acceptor role is filled by Tyr-139. Lys-143 is a binding site for NADP(+). Asn-174 contacts substrate. NADP(+)-binding residues include Val-175 and Lys-183. Lys-183 acts as the Proton acceptor in catalysis. Substrate-binding positions include Ser-185, His-192, 206 to 209 (FAGS), Arg-214, and Tyr-277.

It belongs to the NAD(P)-dependent epimerase/dehydratase family. HldD subfamily. As to quaternary structure, homopentamer. It depends on NADP(+) as a cofactor.

The enzyme catalyses ADP-D-glycero-beta-D-manno-heptose = ADP-L-glycero-beta-D-manno-heptose. It participates in nucleotide-sugar biosynthesis; ADP-L-glycero-beta-D-manno-heptose biosynthesis; ADP-L-glycero-beta-D-manno-heptose from D-glycero-beta-D-manno-heptose 7-phosphate: step 4/4. The protein operates within bacterial outer membrane biogenesis; LPS core biosynthesis. In terms of biological role, catalyzes the interconversion between ADP-D-glycero-beta-D-manno-heptose and ADP-L-glycero-beta-D-manno-heptose via an epimerization at carbon 6 of the heptose. The protein is ADP-L-glycero-D-manno-heptose-6-epimerase of Vibrio vulnificus (strain CMCP6).